The following is a 300-amino-acid chain: uncharacterized protein (300 aa).

The N-terminal stretch at 1–19 (MKLKLLLIPLLGSSLLLSA) is a signal peptide. C20 carries N-palmitoyl cysteine lipidation. C20 carries the S-diacylglycerol cysteine lipid modification.

Belongs to the MG439/MG440 family.

It localises to the cell membrane. This is an uncharacterized protein from Mycoplasma pneumoniae (strain ATCC 29342 / M129 / Subtype 1) (Mycoplasmoides pneumoniae).